The primary structure comprises 149 residues: Deoxyuridine 5'-triphosphate nucleotidohydrolase (149 aa).

Substrate-binding positions include 68–70 (RSG), N81, and 85–87 (LID).

Belongs to the dUTPase family. Requires Mg(2+) as cofactor.

The catalysed reaction is dUTP + H2O = dUMP + diphosphate + H(+). It participates in pyrimidine metabolism; dUMP biosynthesis; dUMP from dCTP (dUTP route): step 2/2. Functionally, this enzyme is involved in nucleotide metabolism: it produces dUMP, the immediate precursor of thymidine nucleotides and it decreases the intracellular concentration of dUTP so that uracil cannot be incorporated into DNA. This Laribacter hongkongensis (strain HLHK9) protein is Deoxyuridine 5'-triphosphate nucleotidohydrolase.